Consider the following 97-residue polypeptide: Protein GLUTAMINE DUMPER 7 (97 aa).

Topologically, residues 1–25 are extracellular; sequence MSLHRDSMVPVNSRLENMDSPILSK. A helical transmembrane segment spans residues 26-46; sequence ICAWGVMLGLFALSLFAMAYA. Residues 47–97 are Cytoplasmic-facing; that stretch reads CYHKQTSNSCIEEKQGKKQVLKPLDMEPKIVVIMAGNENPTFFAKPTQINA. The VIMAG signature appears at 78–82; that stretch reads VIMAG.

The protein belongs to the GLUTAMINE DUMPER 1 (TC 9.B.60) family. In terms of tissue distribution, expressed in the vascular tissues, even in the minor veins of the leaves.

Its subcellular location is the membrane. In terms of biological role, probable subunit of an amino acid transporter involved in the regulation of the amino acid metabolism. Stimulates amino acid export by activating nonselective amino acid facilitators. In Arabidopsis thaliana (Mouse-ear cress), this protein is Protein GLUTAMINE DUMPER 7 (GDU7).